Reading from the N-terminus, the 166-residue chain is MIYVDNRQEKMEVSDEFTNHLEKVIEFALKEEGVNISSEISLLFVDNEEIREINNETRNIDRATDVLSFPMLDYPEKKVFKEVYTENDFSEADFDGDDLVLGDVVLSLERALEQSKEYNHSYEREASYLVVHSVLHLLGYDHMEEEDKVKMRKREEEILTALDIRR.

Residues histidine 132, histidine 136, and histidine 142 each contribute to the Zn(2+) site.

The protein belongs to the endoribonuclease YbeY family. Zn(2+) serves as cofactor.

The protein resides in the cytoplasm. In terms of biological role, single strand-specific metallo-endoribonuclease involved in late-stage 70S ribosome quality control and in maturation of the 3' terminus of the 16S rRNA. This chain is Endoribonuclease YbeY, found in Clostridium botulinum (strain Eklund 17B / Type B).